Reading from the N-terminus, the 520-residue chain is Sodium-dependent dicarboxylate transporter SdcS (520 aa).

A run of 14 helical transmembrane segments spans residues 30-50 (TGQL…LLFF), 55-75 (LPWK…WWIT), 77-97 (AIPI…GHIL), 104-124 (SEYG…AIAM), 160-180 (SMFV…LAII), 207-227 (IGYA…PLII), 242-262 (FAKW…ITWL), 298-318 (KVVQ…EFLL), 323-343 (VTSS…LFII), 362-382 (ELPW…KGIS), 399-419 (GVSP…LTEV), 428-448 (MILP…LLLM), 452-472 (AMAA…AIIF), and 491-511 (LISA…VLGI).

This sequence belongs to the SLC13A/DASS transporter (TC 2.A.47) family. NADC subfamily.

The protein localises to the cell membrane. In terms of biological role, mediates the transport of the dicarboxylates fumarate, malate, and succinate across the cytoplasmic membrane via a Na(+)-electrochemical gradient. The protein is Sodium-dependent dicarboxylate transporter SdcS (sdcS) of Staphylococcus aureus (strain MRSA252).